We begin with the raw amino-acid sequence, 295 residues long: Tyrosine recombinase XerD (295 aa).

The 85-residue stretch at 1 to 85 (MNTIIEEYLN…TIRSFHQFAL (85 aa)) folds into the Core-binding (CB) domain. A Tyr recombinase domain is found at 106–289 (KLPDVLEIDE…SKSQIRKMYT (184 aa)). Catalysis depends on residues R146, K170, H241, R244, and H267. Catalysis depends on Y276, which acts as the O-(3'-phospho-DNA)-tyrosine intermediate.

This sequence belongs to the 'phage' integrase family. XerD subfamily. In terms of assembly, forms a cyclic heterotetrameric complex composed of two molecules of XerC and two molecules of XerD.

The protein localises to the cytoplasm. Its function is as follows. Site-specific tyrosine recombinase, which acts by catalyzing the cutting and rejoining of the recombining DNA molecules. The XerC-XerD complex is essential to convert dimers of the bacterial chromosome into monomers to permit their segregation at cell division. It also contributes to the segregational stability of plasmids. This chain is Tyrosine recombinase XerD, found in Staphylococcus epidermidis (strain ATCC 12228 / FDA PCI 1200).